Here is a 339-residue protein sequence, read N- to C-terminus: UDP-N-acetylenolpyruvoylglucosamine reductase (339 aa).

In terms of domain architecture, FAD-binding PCMH-type spans 19 to 189 (VDVQARLFAE…LRVRFKLSRV (171 aa)). Arg-166 is a catalytic residue. The active-site Proton donor is Ser-239. Glu-335 is an active-site residue.

Belongs to the MurB family. FAD serves as cofactor.

It is found in the cytoplasm. It carries out the reaction UDP-N-acetyl-alpha-D-muramate + NADP(+) = UDP-N-acetyl-3-O-(1-carboxyvinyl)-alpha-D-glucosamine + NADPH + H(+). It functions in the pathway cell wall biogenesis; peptidoglycan biosynthesis. Cell wall formation. In Pseudomonas savastanoi pv. phaseolicola (strain 1448A / Race 6) (Pseudomonas syringae pv. phaseolicola (strain 1448A / Race 6)), this protein is UDP-N-acetylenolpyruvoylglucosamine reductase.